The following is a 392-amino-acid chain: MINNTDNEYLEQKLSELSKKVPASIISKLRESITNSPIEITRDEIDKIIEIVMKDYLSSLVHPGEAIGVVAAQSIGEPGTQMTLRTFHFAGVRELNVTLGLPRLIEIVDARKVPSTPMMTIYLNEEYAKDRDMALEVARRIEYTRVEHVVETVNLDVGGMGIILKLDPVLLKDKGLSTEDVEKVIKKLKMGDYRVENSDEYTIAIYFENMETVTGLFKAREKILSTKIKGVKGIKRAIIRKKGDEYVIITDGSNLEGVLGVKGVDVSRIETNNLHEVESVLGVEAARELITREIKRVLEEQGLDVDIRHIELVSDIMTRTGEVRQIGRHGVTGEKTSVLARAAFEVTVKHLLDAAARGDMEEFKGVVENIIIGQPIKLGTGMVELLMRPANR.

It belongs to the RNA polymerase beta' chain family. As to quaternary structure, part of the RNA polymerase complex.

It localises to the cytoplasm. The enzyme catalyses RNA(n) + a ribonucleoside 5'-triphosphate = RNA(n+1) + diphosphate. In terms of biological role, DNA-dependent RNA polymerase (RNAP) catalyzes the transcription of DNA into RNA using the four ribonucleoside triphosphates as substrates. Forms part of the jaw domain. In Metallosphaera sedula (strain ATCC 51363 / DSM 5348 / JCM 9185 / NBRC 15509 / TH2), this protein is DNA-directed RNA polymerase subunit Rpo1C.